A 368-amino-acid polypeptide reads, in one-letter code: Protein tesmin/TSO1-like CXC 8 (368 aa).

Positions 64–185 (KHKGCRCKQS…KCINCKNVSE (122 aa)) constitute a CRC domain.

The protein belongs to the lin-54 family.

Its subcellular location is the nucleus. Plays a role in development of both male and female reproductive tissues. The chain is Protein tesmin/TSO1-like CXC 8 (TCX8) from Arabidopsis thaliana (Mouse-ear cress).